Consider the following 804-residue polypeptide: Probable replication endonuclease from prophage-like region 1 (804 aa).

Active-site O-(5'-phospho-DNA)-tyrosine intermediate residues include Tyr498 and Tyr502.

Belongs to the phage GPA family.

Functionally, possible endonuclease which induces a single-strand cut and initiates DNA replication. This chain is Probable replication endonuclease from prophage-like region 1, found in Salmonella typhi.